The sequence spans 278 residues: Large ribosomal subunit protein uL2 (278 aa).

The tract at residues 224 to 278 (VAMNPVDHPHGGGEGRTSGGRNPVTPWGVPTKGKKTRSNKRTDTFILSSRHNRKK) is disordered.

This sequence belongs to the universal ribosomal protein uL2 family. In terms of assembly, part of the 50S ribosomal subunit. Forms a bridge to the 30S subunit in the 70S ribosome.

Its function is as follows. One of the primary rRNA binding proteins. Required for association of the 30S and 50S subunits to form the 70S ribosome, for tRNA binding and peptide bond formation. It has been suggested to have peptidyltransferase activity; this is somewhat controversial. Makes several contacts with the 16S rRNA in the 70S ribosome. The polypeptide is Large ribosomal subunit protein uL2 (Methylorubrum extorquens (strain CM4 / NCIMB 13688) (Methylobacterium extorquens)).